The following is a 227-amino-acid chain: Lysosomal-associated transmembrane protein 4B (227 aa).

Helical transmembrane passes span 26–46 (ILLG…LLSA), 72–92 (MCIA…ATYG), 100–120 (WIIP…LVAI), and 153–173 (CLVL…GYLI). A required for NEDD4 interaction region spans residues 205-222 (PPYDDATAVPSTAKEPPP).

It belongs to the LAPTM4/LAPTM5 transporter family. Homooligomer; upon reaching the lysosomes. Interacts with MCOLN1. Interacts with NEDD4; may play a role in the lysosomal sorting of LAPTM4B; enhances HGS association with NEDD4; mediates inhibition of EGFR degradation. Interacts with PIP5K1C; promotes SNX5 association with LAPTM4B; kinase activity of PIP5K1C is required; interaction is regulated by phosphatidylinositol 4,5-bisphosphate generated by PIP5K1C. Interacts with HGS; promotes HGS ubiquitination. Interacts with SNX5. Interacts with SLC3A2 and SLC7A5; recruits SLC3A2 and SLC7A5 to lysosomes to promote leucine uptake into these organelles and is required for mTORC1 activation. Interacts with LRRC32; decreases TGFB1 production in regulatory T cells. Interacts with BECN1; competes with EGFR for LAPTM4B binding; regulates EGFR activity. Interacts with EGFR; positively correlates with EGFR activation. Undergoes proteolytic cleavage following delivery to the lysosomes. Post-translationally, ubiquitinated by NEDD4.

Its subcellular location is the endomembrane system. The protein localises to the late endosome membrane. The protein resides in the cell membrane. It is found in the cell projection. It localises to the lysosome membrane. Its subcellular location is the endosome membrane. The protein localises to the endosome. The protein resides in the multivesicular body membrane. It is found in the multivesicular body lumen. Required for optimal lysosomal function. Blocks EGF-stimulated EGFR intraluminal sorting and degradation. Conversely by binding with the phosphatidylinositol 4,5-bisphosphate, regulates its PIP5K1C interaction, inhibits HGS ubiquitination and relieves LAPTM4B inhibition of EGFR degradation. Recruits SLC3A2 and SLC7A5 (the Leu transporter) to the lysosome, promoting entry of leucine and other essential amino acid (EAA) into the lysosome, stimulating activation of proton-transporting vacuolar (V)-ATPase protein pump (V-ATPase) and hence mTORC1 activation. Plays a role as negative regulator of TGFB1 production in regulatory T cells. Binds ceramide and facilitates its exit from late endosome in order to control cell death pathways. This chain is Lysosomal-associated transmembrane protein 4B, found in Mus musculus (Mouse).